Here is a 25-residue protein sequence, read N- to C-terminus: Cytochrome c oxidase subunit 1 (25 aa).

Belongs to the heme-copper respiratory oxidase family. Cu(2+) serves as cofactor. Requires heme as cofactor.

Its subcellular location is the cell inner membrane. It carries out the reaction 4 Fe(II)-[cytochrome c] + O2 + 8 H(+)(in) = 4 Fe(III)-[cytochrome c] + 2 H2O + 4 H(+)(out). The protein operates within energy metabolism; oxidative phosphorylation. Subunit I and II form the functional core of the enzyme complex. Electrons originating in cytochrome c are transferred via heme a and Cu(A) to the binuclear center formed by heme a3 and Cu(B). This cytochrome c oxidase shows proton pump activity across the membrane in addition to the electron transfer. In Paracoccus versutus (Thiobacillus versutus), this protein is Cytochrome c oxidase subunit 1 (ctaD).